Consider the following 196-residue polypeptide: Carnitine operon protein CaiE (196 aa).

Residues 173–196 are disordered; it reads TQPLRQMEENRPRLQGTTDVTPKR. Over residues 187–196 the composition is skewed to polar residues; that stretch reads QGTTDVTPKR.

The protein belongs to the transferase hexapeptide repeat family.

The protein operates within amine and polyamine metabolism; carnitine metabolism. Functionally, overproduction of CaiE stimulates the activity of CaiB and CaiD. The chain is Carnitine operon protein CaiE from Escherichia coli O157:H7.